The primary structure comprises 394 residues: Peroxisomal membrane protein PEX25 (394 aa).

The segment covering 1-25 (MSQFGTTDIVSGSETPPYSGASYQD) has biased composition (polar residues). Residues 1–65 (MSQFGTTDIV…SRSDDEDSQA (65 aa)) form a disordered region. The Cytoplasmic segment spans residues 1-366 (MSQFGTTDIV…LNLKTPKGTY (366 aa)). Basic and acidic residues predominate over residues 51 to 65 (SHTESSRSDDEDSQA). A phosphoserine mark is found at Ser-58, Ser-63, and Ser-289. A helical transmembrane segment spans residues 367–383 (AVLSLGSGLTGLVKLWI). The Lumenal portion of the chain corresponds to 384–394 (TTKRSLCSSKD).

Homooligomer. Interacts with PEX27 and PEX34.

Its subcellular location is the peroxisome membrane. Required for regulation of peroxisome size and maintenance. Has a role in the import of peroxisomal matrix proteins. Imports RHO1 into the peroxisome. Also promotes peroxisome division and biogenesis. The polypeptide is Peroxisomal membrane protein PEX25 (PEX25) (Saccharomyces cerevisiae (strain ATCC 204508 / S288c) (Baker's yeast)).